The primary structure comprises 425 residues: Podosporapepsin (425 aa).

A signal peptide spans 1–28 (MVSLTDLFLASLLVPTSPWLCLPPRIDT). Positions 29–91 (IDQRGGRVTL…QEEAFARIKR (63 aa)) are cleaved as a propeptide — activation peptide. Positions 108–419 (YVTPVTIGTP…GTNPPRIGFA (312 aa)) constitute a Peptidase A1 domain. Residue D126 is part of the active site. N184 and N273 each carry an N-linked (GlcNAc...) asparagine glycan. Residue D310 is part of the active site. The cysteines at positions 346 and 381 are disulfide-linked. N-linked (GlcNAc...) asparagine glycosylation occurs at N370.

This sequence belongs to the peptidase A1 family.

The protein is Podosporapepsin (PAPA) of Podospora anserina (Pleurage anserina).